Consider the following 600-residue polypeptide: NADH-ubiquinone oxidoreductase chain 5 (600 aa).

16 consecutive transmembrane segments (helical) span residues 1–21, 27–47, 81–101, 110–130, 136–156, 178–198, 200–220, 241–261, 274–294, 301–323, 327–347, 366–386, 404–424, 450–470, 488–508, and 520–540; these read MYIL…LFGR, GAGI…LLIF, LTAV…IFST, VPRF…LVTS, LFIG…FWLT, FVLA…ASVF, IVAL…FIGA, TPVS…FLLI, LMVV…IGLV, VIAY…SQYS, FHLM…GSVI, IPFT…FPYL, YLAF…AYSL, WNLT…GYLT, SIKL…VVLY, and SPVG…NYII.

It belongs to the complex I subunit 5 family.

The protein localises to the mitochondrion inner membrane. The enzyme catalyses a ubiquinone + NADH + 5 H(+)(in) = a ubiquinol + NAD(+) + 4 H(+)(out). In terms of biological role, core subunit of the mitochondrial membrane respiratory chain NADH dehydrogenase (Complex I) that is believed to belong to the minimal assembly required for catalysis. Complex I functions in the transfer of electrons from NADH to the respiratory chain. The immediate electron acceptor for the enzyme is believed to be ubiquinone. In Metridium senile (Brown sea anemone), this protein is NADH-ubiquinone oxidoreductase chain 5 (ND5).